Consider the following 462-residue polypeptide: Cytochrome P450 20A1 (462 aa).

The chain crosses the membrane as a helical span at residues 4 to 24 (FAIFAVTFLLALVGAVLYLYP). Residue C409 coordinates heme.

Belongs to the cytochrome P450 family. Requires heme as cofactor.

The protein resides in the membrane. The sequence is that of Cytochrome P450 20A1 (Cyp20a1) from Rattus norvegicus (Rat).